A 452-amino-acid chain; its full sequence is Na(+)/H(+) antiporter NhaA (452 aa).

11 consecutive transmembrane segments (helical) span residues 27-47 (FLHI…TALI), 78-98 (LHFW…GMEI), 114-134 (ILPI…YLSF), 141-161 (IYGW…ILAL), 172-192 (IILL…IAFF), 201-221 (GLAI…ISFA), 222-242 (SAWL…VTGI), 316-336 (PWVA…VSFA), 346-366 (FLIV…GILA), 388-408 (ILLI…VSML), and 421-441 (IGVL…GLIY).

This sequence belongs to the NhaA Na(+)/H(+) (TC 2.A.33) antiporter family.

It is found in the cell inner membrane. The enzyme catalyses Na(+)(in) + 2 H(+)(out) = Na(+)(out) + 2 H(+)(in). Functionally, na(+)/H(+) antiporter that extrudes sodium in exchange for external protons. The polypeptide is Na(+)/H(+) antiporter NhaA (Bartonella bacilliformis (strain ATCC 35685 / KC583 / Herrer 020/F12,63)).